The following is a 121-amino-acid chain: Large ribosomal subunit protein bL12 (121 aa).

This sequence belongs to the bacterial ribosomal protein bL12 family. As to quaternary structure, homodimer. Part of the ribosomal stalk of the 50S ribosomal subunit. Forms a multimeric L10(L12)X complex, where L10 forms an elongated spine to which 2 to 4 L12 dimers bind in a sequential fashion. Binds GTP-bound translation factors.

Forms part of the ribosomal stalk which helps the ribosome interact with GTP-bound translation factors. Is thus essential for accurate translation. This Vibrio atlanticus (strain LGP32) (Vibrio splendidus (strain Mel32)) protein is Large ribosomal subunit protein bL12.